The following is a 287-amino-acid chain: Steroidogenic acute regulatory protein, mitochondrial (287 aa).

The transit peptide at 1–61 (MLPATFKLCA…RRSSLLSSRI (61 aa)) directs the protein to the mitochondrion. Positions 66–279 (GYNEAEVSYV…LRQRMADNSV (214 aa)) constitute an START domain.

May interact with TSPO.

It is found in the mitochondrion. The enzyme catalyses cholesterol(in) = cholesterol(out). The protein operates within steroid metabolism; cholesterol metabolism. Functionally, plays a key role in steroid hormone synthesis by enhancing the metabolism of cholesterol into pregnenolone. Mediates the transfer of cholesterol from the outer mitochondrial membrane to the inner mitochondrial membrane where it is cleaved to pregnenolone. In Salvelinus fontinalis (Brook trout), this protein is Steroidogenic acute regulatory protein, mitochondrial (star).